The following is a 1174-amino-acid chain: Male determiner protein Mdmd(Y) (1174 aa).

Residues 1–15 show a composition bias toward basic and acidic residues; it reads MNATDAESRKPENKP. 3 disordered regions span residues 1–51, 79–109, and 136–259; these read MNAT…SGQR, RKDG…HPVE, and KQLS…LRRS. Low complexity predominate over residues 16–35; it reads SSESSSSGSTSGSSDGEVSS. Over residues 36–47 the composition is skewed to polar residues; the sequence is KTYFKNNKSKVL. The span at 79 to 92 shows a compositional bias: basic and acidic residues; the sequence is RKDGSNEMLPKEDS. The span at 138-153 shows a compositional bias: low complexity; that stretch reads LSAYRSRSRSTRLSYS. Basic residues predominate over residues 167–180; the sequence is SRYKKSVLRNRRTS. Positions 183-200 are enriched in basic and acidic residues; the sequence is HGRDSSTTKRSVSRDKDN. Over residues 201–223 the composition is skewed to basic residues; it reads RLRRRIGSSRSHTRSHSRFRRSE. Residues 235–259 show a composition bias toward basic and acidic residues; the sequence is RSQERRHERRRSMSSDYERIALRRS. The MIF4G domain occupies 348-531; the sequence is KKYIHGYINK…KVLFQVRRDG (184 aa). Residues 597 to 608 are compositionally biased toward low complexity; that stretch reads DSDGSFGSGSNS. The segment at 597–616 is disordered; the sequence is DSDGSFGSGSNSETALSDCD. The region spanning 641–757 is the MI domain; it reads ALRRTIYLTL…SWDVLDCIKL (117 aa). Low complexity predominate over residues 840–857; the sequence is SAPSSSSSSSLSSELSAP. Disordered stretches follow at residues 840-1045 and 1089-1135; these read SAPS…SRTK and KGGP…SREY. Basic residues-rich tracts occupy residues 869-886 and 895-909; these read KKKH…KNPS and IVGK…KTIK. The segment covering 910–924 has biased composition (basic and acidic residues); it reads RRTDKDNSSSKDNFL. Positions 926 to 957 are enriched in low complexity; sequence SESSSNESISLDSLSSELFAPSSYSSSESSND. Residues 963 to 1001 show a composition bias toward basic residues; that stretch reads KHKGKNKKMTKKKNPSNKREKTKKKLSKNKKAPNKNTKK. Residues 1010-1020 are compositionally biased toward low complexity; that stretch reads SSESSISESKS. Over residues 1034 to 1045 the composition is skewed to basic residues; the sequence is RKKRVTSKSRTK. A compositionally biased stretch (basic and acidic residues) spans 1089–1118; that stretch reads KGGPNCRKDNYGNRQNHEISQRHDSEIKRR. Positions 1119–1130 are enriched in basic residues; sequence REERKKRHHEKN.

The protein belongs to the CWC22 family. In terms of assembly, component of the spliceosome C complex.

Its subcellular location is the nucleus speckle. Functionally, male determiner protein (M-factor) that controls male somatic sexual differentiation. Acts as a dominant factor that regulates the mRNA splicing of transformer (tra) and doublesex (dsx) transcripts and promotes expression of male splice forms of tra and dsx. Probably acts as a component of the spliceosome C complex required for mRNA splicing factor and exon-junction complex (EJC) assembly. Hinders eIF4AIII from non-specifically binding RNA and escorts it to the splicing machinery to promote EJC assembly on mature mRNAs. The sequence is that of Male determiner protein Mdmd(Y) from Musca domestica (House fly).